A 359-amino-acid polypeptide reads, in one-letter code: DNA replication and repair protein RecF (359 aa).

Position 30 to 37 (30 to 37 (GKNGIGKT)) interacts with ATP.

This sequence belongs to the RecF family.

The protein resides in the cytoplasm. The RecF protein is involved in DNA metabolism; it is required for DNA replication and normal SOS inducibility. RecF binds preferentially to single-stranded, linear DNA. It also seems to bind ATP. This Flavobacterium johnsoniae (strain ATCC 17061 / DSM 2064 / JCM 8514 / BCRC 14874 / CCUG 350202 / NBRC 14942 / NCIMB 11054 / UW101) (Cytophaga johnsonae) protein is DNA replication and repair protein RecF.